A 346-amino-acid chain; its full sequence is Biotin synthase (346 aa).

Residues 41–265 (NEVQISTLLS…MMPHSYVRLS (225 aa)) enclose the Radical SAM core domain. 3 residues coordinate [4Fe-4S] cluster: Cys-56, Cys-60, and Cys-63. Residues Cys-100, Cys-131, Cys-191, and Arg-263 each contribute to the [2Fe-2S] cluster site.

Belongs to the radical SAM superfamily. Biotin synthase family. In terms of assembly, homodimer. [4Fe-4S] cluster serves as cofactor. The cofactor is [2Fe-2S] cluster.

It catalyses the reaction (4R,5S)-dethiobiotin + (sulfur carrier)-SH + 2 reduced [2Fe-2S]-[ferredoxin] + 2 S-adenosyl-L-methionine = (sulfur carrier)-H + biotin + 2 5'-deoxyadenosine + 2 L-methionine + 2 oxidized [2Fe-2S]-[ferredoxin]. Its pathway is cofactor biosynthesis; biotin biosynthesis; biotin from 7,8-diaminononanoate: step 2/2. Catalyzes the conversion of dethiobiotin (DTB) to biotin by the insertion of a sulfur atom into dethiobiotin via a radical-based mechanism. This Pseudoalteromonas translucida (strain TAC 125) protein is Biotin synthase.